Reading from the N-terminus, the 490-residue chain is Doublesex- and mab-3-related transcription factor A1 (490 aa).

Positions 1-13 (MERLPHGRRDRSG) are enriched in basic and acidic residues. The tract at residues 1–31 (MERLPHGRRDRSGGCRPHLAPGRAAAPASAA) is disordered. Positions 20–31 (APGRAAAPASAA) are enriched in low complexity. A DNA-binding region (DM) is located at residues 86–133 (CARCRNHGVVSALKGHKRFCRWRDCACAKCTLIAERQRVMAAQVALRR). 2 disordered regions span residues 152-171 (GSSGSGAQASGGSGRTESPQ) and 207-289 (DRKQ…DLES). The segment covering 207–216 (DRKQEPKQRN) has biased composition (basic and acidic residues). Polar residues-rich tracts occupy residues 217–242 (CESCQSRQEEPVSNTHHHSLGSSKGN) and 269–289 (PTDQSGGEDSPRSFSSSDLES). Positions 314 to 349 (RDPLGILTRIFPGYKHSRLEGILQFCKGDVVQAIEQ) constitute a DMA domain.

This sequence belongs to the DMRT family. In terms of tissue distribution, widely expressed, with highest levels in ovary, testis, epididymis, preputial gland, vomeronasal organ, liver, salivary glands and heart. Also expressed throughout the brain with highest levels in the olfactory bulbs and medulla. Detected at similar levels in gonads of both sexes.

It is found in the nucleus. The chain is Doublesex- and mab-3-related transcription factor A1 (Dmrta1) from Mus musculus (Mouse).